We begin with the raw amino-acid sequence, 380 residues long: Homeobox protein ceh-6 (380 aa).

A compositionally biased stretch (low complexity) spans 1 to 25 (MLIPSSSSIPSSLSASASDSEPSSL). Disordered stretches follow at residues 1 to 31 (MLIPSSSSIPSSLSASASDSEPSSLNGSGIS), 167 to 190 (SGSVSGAGGPHQPLSDISDDSEQT), and 265 to 286 (GSPNSTFEKMTGQAGRKRKKRT). The region spanning 187-261 (SEQTCPDDLE…LLFKWLEEAD (75 aa)) is the POU-specific domain. The homeobox DNA-binding region spans 281 to 340 (KRKKRTSIEVNVKSRLEFHFQSNQKPNAQEITQVAMELQLEKEVVRVWFCNRRQKEKRIA).

The protein belongs to the POU transcription factor family. Class-3 subfamily. As to quaternary structure, interacts with egl-27, sox-2 and sem-4. Interacts with wdr-5.1. Expressed in a series of neurons in the ring ganglia, excretory cell, dividing neuroblasts in the ventral cord and rectal cells.

Its subcellular location is the nucleus. Its function is as follows. Vital for embryonic development and essential for the proper function of the excretory cell. Required for the transdifferentiation of the Y rectal epithelial cell to the PDA motor neuron during larval development. In Caenorhabditis elegans, this protein is Homeobox protein ceh-6.